A 316-amino-acid polypeptide reads, in one-letter code: Ornithine carbamoyltransferase (316 aa).

Carbamoyl phosphate contacts are provided by residues 59-62 (STRT), Q86, R110, and 137-140 (HPCQ). L-ornithine contacts are provided by residues N168, D232, and 236 to 237 (SM). Carbamoyl phosphate is bound by residues 273 to 274 (CL) and R301.

The protein belongs to the aspartate/ornithine carbamoyltransferase superfamily. OTCase family.

Its subcellular location is the cytoplasm. The enzyme catalyses carbamoyl phosphate + L-ornithine = L-citrulline + phosphate + H(+). Its pathway is amino-acid biosynthesis; L-arginine biosynthesis; L-arginine from L-ornithine and carbamoyl phosphate: step 1/3. In terms of biological role, reversibly catalyzes the transfer of the carbamoyl group from carbamoyl phosphate (CP) to the N(epsilon) atom of ornithine (ORN) to produce L-citrulline. This chain is Ornithine carbamoyltransferase, found in Listeria innocua serovar 6a (strain ATCC BAA-680 / CLIP 11262).